We begin with the raw amino-acid sequence, 150 residues long: Nascent polypeptide-associated complex subunit beta (150 aa).

Disordered regions lie at residues 1 to 45 (MADV…LQQS) and 123 to 150 (YQNM…NKVE). Over residues 23–32 (TPRRKVKRAP) the composition is skewed to basic residues. Positions 36 to 101 (GADDKKLQQS…GEDKELTELV (66 aa)) constitute an NAC-A/B domain.

This sequence belongs to the NAC-beta family. Part of the nascent polypeptide-associated complex (NAC), consisting of EGD2 and EGD1. NAC associates with ribosomes via EGD1.

The protein localises to the cytoplasm. Its subcellular location is the nucleus. Component of the nascent polypeptide-associated complex (NAC), a dynamic component of the ribosomal exit tunnel, protecting the emerging polypeptides from interaction with other cytoplasmic proteins to ensure appropriate nascent protein targeting. The NAC complex also promotes mitochondrial protein import by enhancing productive ribosome interactions with the outer mitochondrial membrane and blocks the inappropriate interaction of ribosomes translating non-secretory nascent polypeptides with translocation sites in the membrane of the endoplasmic reticulum. EGD1 may act as a transcription factor that exert a negative effect on the expression of several genes that are transcribed by RNA polymerase II. The polypeptide is Nascent polypeptide-associated complex subunit beta (EGD1) (Chaetomium globosum (strain ATCC 6205 / CBS 148.51 / DSM 1962 / NBRC 6347 / NRRL 1970) (Soil fungus)).